The chain runs to 769 residues: Sensor histidine kinase ComP (769 aa).

Topologically, residues 1–9 (MKNLIKKFT) are cytoplasmic. A helical membrane pass occupies residues 10–33 (IAVIVLSILYISYTTYISMNGIII). At 34-113 (GTKIHKNDKS…DFDLVTLNRP (80 aa)) the chain is on the extracellular side. A helical membrane pass occupies residues 114–134 (YSFFLFVLPLFFYFLSIICIF). The Cytoplasmic segment spans residues 135–144 (YILKVNKKRR). A helical transmembrane segment spans residues 145 to 167 (SFAAYILILLLLDISIAYISAGG). Residues 168–235 (PFRGHIINRY…QDYLQVDIDF (68 aa)) are Extracellular-facing. A helical transmembrane segment spans residues 236 to 257 (LATLNLVSFATLTLFSFSAIYL). Residues 258–272 (HLNKYKYAEHSFILK) lie on the Cytoplasmic side of the membrane. The helical transmembrane segment at 273 to 295 (LLILTNTLSFAPFLIFFVLPIIF) threads the bilayer. The Extracellular portion of the chain corresponds to 296 to 299 (TGNY). Residues 300–323 (IFPALASASLLVLIPFGLVYQFVA) form a helical membrane-spanning segment. The Cytoplasmic segment spans residues 324-337 (NKMFDIEFILGRMR). The helical transmembrane segment at 338–357 (YYALLAMIPTLLIVGALVLF) threads the bilayer. The Extracellular portion of the chain corresponds to 358–361 (DVMD). A helical transmembrane segment spans residues 362-383 (IQMNPVRQTVFFFVVMFAVFYF). Residues 384–769 (KEVMDFKFRL…GFKADIEIEL (386 aa)) lie on the Cytoplasmic side of the membrane. The Histidine kinase domain occupies 571 to 769 (LARDLHDSVL…GFKADIEIEL (199 aa)). Histidine 576 carries the post-translational modification Phosphohistidine; by autocatalysis.

Autophosphorylates on a histidine and transfers the phosphate group onto an aspartate in ComA, thus activating it.

It localises to the cell membrane. The catalysed reaction is ATP + protein L-histidine = ADP + protein N-phospho-L-histidine.. In terms of biological role, sensor in the two-component regulatory system ComP/ComA involved in a major quorum response pathway that regulates the development of genetic competence. Plays a role in sporulation, at least partly interchangeable with that of SpoIIJ. Probably activates ComA by phosphorylation. The polypeptide is Sensor histidine kinase ComP (comP) (Bacillus subtilis (strain 168)).